A 384-amino-acid polypeptide reads, in one-letter code: Ribonucleoside-diphosphate reductase small chain (384 aa).

Positions 130, 161, and 164 each coordinate Fe cation. The active site involves Y168. Fe cation contacts are provided by E224, E258, and H261.

It belongs to the ribonucleoside diphosphate reductase small chain family. As to quaternary structure, heterodimer of a large and a small subunit. Requires Fe cation as cofactor.

It carries out the reaction a 2'-deoxyribonucleoside 5'-diphosphate + [thioredoxin]-disulfide + H2O = a ribonucleoside 5'-diphosphate + [thioredoxin]-dithiol. Provides the precursors necessary for DNA synthesis. Catalyzes the biosynthesis of deoxyribonucleotides from the corresponding ribonucleotides. The polypeptide is Ribonucleoside-diphosphate reductase small chain (Spisula solidissima (Atlantic surf-clam)).